A 175-amino-acid polypeptide reads, in one-letter code: Bifunctional protein PyrR (175 aa).

A PRPP-binding motif is present at residues 98-110 (VIIIDDVLYTGRT).

The protein belongs to the purine/pyrimidine phosphoribosyltransferase family. PyrR subfamily. In terms of assembly, homodimer and homohexamer; in equilibrium.

It carries out the reaction UMP + diphosphate = 5-phospho-alpha-D-ribose 1-diphosphate + uracil. Regulates transcriptional attenuation of the pyrimidine nucleotide (pyr) operon by binding in a uridine-dependent manner to specific sites on pyr mRNA. This disrupts an antiterminator hairpin in the RNA and favors formation of a downstream transcription terminator, leading to a reduced expression of downstream genes. Its function is as follows. Also displays a weak uracil phosphoribosyltransferase activity which is not physiologically significant. The sequence is that of Bifunctional protein PyrR from Staphylococcus carnosus (strain TM300).